The following is a 591-amino-acid chain: Aspartate--tRNA(Asp/Asn) ligase (591 aa).

Residue glutamate 176 coordinates L-aspartate. The tract at residues glutamine 200 to lysine 203 is aspartate. L-aspartate is bound at residue arginine 222. ATP contacts are provided by residues arginine 222 to glutamate 224 and glutamine 231. Histidine 450 contributes to the L-aspartate binding site. An ATP-binding site is contributed by glutamate 484. Arginine 491 contributes to the L-aspartate binding site. Residue glycine 536–arginine 539 participates in ATP binding.

The protein belongs to the class-II aminoacyl-tRNA synthetase family. Type 1 subfamily. Homodimer.

The protein localises to the cytoplasm. The enzyme catalyses tRNA(Asx) + L-aspartate + ATP = L-aspartyl-tRNA(Asx) + AMP + diphosphate. Functionally, aspartyl-tRNA synthetase with relaxed tRNA specificity since it is able to aspartylate not only its cognate tRNA(Asp) but also tRNA(Asn). Reaction proceeds in two steps: L-aspartate is first activated by ATP to form Asp-AMP and then transferred to the acceptor end of tRNA(Asp/Asn). The polypeptide is Aspartate--tRNA(Asp/Asn) ligase (Bacillus cereus (strain G9842)).